The sequence spans 320 residues: Ferrochelatase (320 aa).

The Fe cation site is built by histidine 194 and glutamate 275.

The protein belongs to the ferrochelatase family. In terms of assembly, monomer.

It localises to the cytoplasm. The enzyme catalyses heme b + 2 H(+) = protoporphyrin IX + Fe(2+). It participates in porphyrin-containing compound metabolism; protoheme biosynthesis; protoheme from protoporphyrin-IX: step 1/1. In terms of biological role, catalyzes the ferrous insertion into protoporphyrin IX. The polypeptide is Ferrochelatase (Salmonella schwarzengrund (strain CVM19633)).